Reading from the N-terminus, the 335-residue chain is Acyl-CoA Delta(11) desaturase (335 aa).

The next 3 membrane-spanning stretches (helical) occupy residues 39–59 (LLTF…CFTS), 64–84 (TIIL…AGAH), and 98–118 (LQII…IHWI). The short motif at 84–89 (HRLWAH) is the Histidine box-1 element. A Histidine box-2 motif is present at residues 121–125 (HRMHH). 2 helical membrane passes run 182-202 (AIPF…MYFW) and 213-235 (TMLR…HLYG). A Histidine box-3 motif is present at residues 261–265 (HNYHH). The tract at residues 312-335 (MKRTGDGTDVSGQKYSCESSEVLQ) is disordered. A compositionally biased stretch (polar residues) spans 321-335 (VSGQKYSCESSEVLQ).

The protein belongs to the fatty acid desaturase type 1 family. The cofactor is Fe cation. As to expression, detected in pheromone gland.

It localises to the membrane. The catalysed reaction is an 11,12-saturated fatty acyl-CoA + 2 Fe(II)-[cytochrome b5] + O2 + 2 H(+) = an (11Z)-Delta(11)-fatty acyl-CoA + 2 Fe(III)-[cytochrome b5] + 2 H2O. Catalyzes the formation of Delta(11) fatty acyl precursors in the pheromone gland, with a preference for myristic acid. The sequence is that of Acyl-CoA Delta(11) desaturase from Choristoneura rosaceana (Oblique banded leafroller).